Here is a 21-residue protein sequence, read N- to C-terminus: Pollen allergen Ole e 7 (21 aa).

This chain is Pollen allergen Ole e 7, found in Olea europaea (Common olive).